The primary structure comprises 104 residues: Replication restart protein PriB (104 aa).

The SSB domain occupies 1–101 (MTNRLTLSGT…LHAEQIELID (101 aa)).

Belongs to the PriB family. As to quaternary structure, homodimer. Interacts with PriA and DnaT. Component of the replication restart primosome. Primosome assembly occurs via a 'hand-off' mechanism. PriA binds to replication forks, subsequently PriB then DnaT bind; DnaT then displaces ssDNA to generate the helicase loading substrate.

In terms of biological role, involved in the restart of stalled replication forks, which reloads the replicative helicase on sites other than the origin of replication; the PriA-PriB pathway is the major replication restart pathway. During primosome assembly it facilitates complex formation between PriA and DnaT on DNA; stabilizes PriA on DNA. Stimulates the DNA unwinding activity of PriA helicase. The polypeptide is Replication restart protein PriB (Salmonella typhi).